Reading from the N-terminus, the 157-residue chain is S-ribosylhomocysteine lyase (157 aa).

Residues histidine 60, histidine 64, and cysteine 127 each contribute to the Fe cation site.

Belongs to the LuxS family. Homodimer. Requires Fe cation as cofactor.

The enzyme catalyses S-(5-deoxy-D-ribos-5-yl)-L-homocysteine = (S)-4,5-dihydroxypentane-2,3-dione + L-homocysteine. Involved in the synthesis of autoinducer 2 (AI-2) which is secreted by bacteria and is used to communicate both the cell density and the metabolic potential of the environment. The regulation of gene expression in response to changes in cell density is called quorum sensing. Catalyzes the transformation of S-ribosylhomocysteine (RHC) to homocysteine (HC) and 4,5-dihydroxy-2,3-pentadione (DPD). The polypeptide is S-ribosylhomocysteine lyase (Helicobacter acinonychis (strain Sheeba)).